The chain runs to 179 residues: Ribosome maturation factor RimP (179 aa).

The protein belongs to the RimP family.

It is found in the cytoplasm. In terms of biological role, required for maturation of 30S ribosomal subunits. This chain is Ribosome maturation factor RimP, found in Prosthecochloris aestuarii (strain DSM 271 / SK 413).